The following is a 191-amino-acid chain: Protein 2 in picA locus (191 aa).

It belongs to the acyltransferase 3 family.

It localises to the cell membrane. Its function is as follows. Seems to regulate the surface properties of the bacterium in the presence of plant cells or plant cell extracts. This chain is Protein 2 in picA locus, found in Rhizobium radiobacter (Agrobacterium tumefaciens).